Reading from the N-terminus, the 324-residue chain is Ribosomal lysine N-methyltransferase 5 (324 aa).

Residues Trp90, 140-142 (GSG), Asp162, Trp217, and Met247 contribute to the S-adenosyl-L-methionine site.

It belongs to the class I-like SAM-binding methyltransferase superfamily. RKM5 family.

Its function is as follows. S-adenosyl-L-methionine-dependent protein-lysine N-methyltransferase that methylates 60S ribosomal protein L1. The sequence is that of Ribosomal lysine N-methyltransferase 5 (RKM5) from Vanderwaltozyma polyspora (strain ATCC 22028 / DSM 70294 / BCRC 21397 / CBS 2163 / NBRC 10782 / NRRL Y-8283 / UCD 57-17) (Kluyveromyces polysporus).